Reading from the N-terminus, the 300-residue chain is Epimerase family protein SACOL0834 (300 aa).

It belongs to the NAD(P)-dependent epimerase/dehydratase family. SDR39U1 subfamily.

The protein is Epimerase family protein SACOL0834 of Staphylococcus aureus (strain COL).